A 476-amino-acid chain; its full sequence is Neuropeptide-like precursor 1 (476 aa).

Residues M1–S34 form the signal peptide. V133 carries the valine amide modification. 2 propeptides span residues D160–F232 and Y259–Q476. Disordered stretches follow at residues Q275 to V298 and P360 to T385. Over residues D286 to E297 the composition is skewed to acidic residues.

In terms of tissue distribution, neuropeptide-like precursor 1-1: Expressed in antennal lobe (AL), corpora cardiaca (CC), corpora allata (CA) and gnathal ganglion (GNG) (at protein level). Expression in AL detected in all animals, in GNG in most animals, expression in CC and CA in few animals (at protein level). Neuropeptide-like precursor 1-2: Expressed in antennal lobe (AL), corpora cardiaca (CC), corpora allata (CA) and gnathal ganglion (GNG) (at protein level). Expression in AL detected in all animals, in GNG in some animals, expression in CC and CA in few animals (at protein level). Neuropeptide-like precursor 1-3: Not expressed in antennal lobe (AL), corpora cardiaca (CC), corpora allata (CA) and gnathal ganglion (GNG) (at protein level). Neuropeptide-like precursor 1-4: Expressed in antennal lobe (AL) and gnathal ganglion (GNG) (at protein level). Expression in AL detected in most animals, in GNG in some animals (at protein level). Not expressed in CC and CA (at protein level). YRVamide: Expressed in antennal lobe (AL), corpora cardiaca (CC), corpora allata (CA) and gnathal ganglion (GNG) (at protein level). Expression in AL and GNG detected in most animals, expression in CC and CA in few animals (at protein level). Extended YRVamide: Expressed in antennal lobe (AL) and gnathal ganglion (GNG) (at protein level). Expression in AL detected in most animals, in GNG in some animals (at protein level). Not expressed in corpora cardiaca (CC) and corpora allata (CA) (at protein level). Neuropeptide-like precursor 1-6: Expressed in antennal lobe (AL), corpora cardiaca (CC), corpora allata (CA) and gnathal ganglion (GNG) (at protein level). Expression in GNG detected in all animals, expression in AL in most animals, in CC and CA in few animals (at protein level). Neuropeptide-like precursor 1-6(1-11): Expressed in antennal lobe (AL) and gnathal ganglion (GNG) in most animals (at protein level). Not expressed in corpora cardiaca (CC) and corpora allata (CA) (at protein level). Neuropeptide-like precursor 1-9: Expressed in antennal lobe (AL) and gnathal ganglion (GNG) (at protein level). Expression in AL detected in all animals in GNG in most (at protein level). Not expressed in corpora cardiaca (CC) and corpora allata (CA) (at protein level).

It is found in the secreted. The chain is Neuropeptide-like precursor 1 from Agrotis ipsilon (Black cutworm moth).